Reading from the N-terminus, the 801-residue chain is Phenylalanine--tRNA ligase beta subunit (801 aa).

Residues 39–153 form the tRNA-binding domain; sequence AEGLSKLVVG…EGAIPGDSIF (115 aa). Residues 406-481 enclose the B5 domain; sequence TEPVEVSTTL…RIYGYEKLPT (76 aa). Mg(2+) contacts are provided by Asp-459, Asp-465, Glu-468, and Glu-469. One can recognise an FDX-ACB domain in the interval 708-801; sequence TKYPSVSRDI…LVEKVNAEIR (94 aa).

Belongs to the phenylalanyl-tRNA synthetase beta subunit family. Type 1 subfamily. As to quaternary structure, tetramer of two alpha and two beta subunits. Mg(2+) serves as cofactor.

It localises to the cytoplasm. It carries out the reaction tRNA(Phe) + L-phenylalanine + ATP = L-phenylalanyl-tRNA(Phe) + AMP + diphosphate + H(+). The protein is Phenylalanine--tRNA ligase beta subunit of Streptococcus agalactiae serotype Ia (strain ATCC 27591 / A909 / CDC SS700).